The following is a 160-amino-acid chain: Putative 4-hydroxy-4-methyl-2-oxoglutarate aldolase (160 aa).

Residues G75–I78 and R97 each bind substrate. D98 is a binding site for a divalent metal cation.

Belongs to the class II aldolase/RraA-like family. In terms of assembly, homotrimer. The cofactor is a divalent metal cation.

It carries out the reaction 4-hydroxy-4-methyl-2-oxoglutarate = 2 pyruvate. The catalysed reaction is oxaloacetate + H(+) = pyruvate + CO2. Catalyzes the aldol cleavage of 4-hydroxy-4-methyl-2-oxoglutarate (HMG) into 2 molecules of pyruvate. Also contains a secondary oxaloacetate (OAA) decarboxylase activity due to the common pyruvate enolate transition state formed following C-C bond cleavage in the retro-aldol and decarboxylation reactions. This is Putative 4-hydroxy-4-methyl-2-oxoglutarate aldolase from Rhodospirillum centenum (strain ATCC 51521 / SW).